Here is a 189-residue protein sequence, read N- to C-terminus: uncharacterized protein (189 aa).

The 61-residue stretch at 9–69 (ADTGGRILRA…SMLTSHIADV (61 aa)) folds into the HTH tetR-type domain. A DNA-binding region (H-T-H motif) is located at residues 32–51 (TLAEIARRAGVSRPTVYRRW).

This is an uncharacterized protein from Mycobacterium tuberculosis (strain CDC 1551 / Oshkosh).